The sequence spans 5635 residues: Hemicentin-1 (5635 aa).

Residues 1–21 (MISWEVVHTVFLFALLYSSLA) form the signal peptide. The region spanning 41-216 (TLAFVFDVTG…EVLKWVEEAV (176 aa)) is the VWFA domain. N-linked (GlcNAc...) asparagine glycans are attached at residues Asn349 and Asn390. 44 Ig-like C2-type domains span residues 431-517 (PKVT…FDVS), 520-607 (PPVI…VFLT), 612-697 (PKVT…STLR), 702-788 (PKLM…ITLD), 793-883 (PVFI…TTVT), 890-976 (PLIG…TSVV), 981-1067 (PTIQ…VQLT), 1072-1166 (PRVF…VKLN), 1171-1255 (PKIQ…TEIT), 1262-1354 (PTVE…YNLK), 1358-1447 (PPVI…FNID), 1452-1541 (PTII…IKLT), 1546-1634 (PSIK…FHVD), 1638-1724 (PPMI…KEIK), 1733-1821 (PAIE…FEVT), 1826-1914 (PTIK…IQLH), 1919-2007 (PSLE…YSLQ), 2012-2097 (PSIS…RDID), 2104-2190 (PNIM…YNVN), 2195-2285 (PNIG…YNLQ), 2290-2379 (PTIT…YDLS), 2384-2470 (PSII…RKIF), 2478-2564 (PHIV…RSFS), 2571-2662 (PTIA…YEVK), 2666-2763 (PPII…VNIQ), 2766-2864 (PSFQ…YDVR), 2868-2959 (PPII…FNLN), 2964-3051 (PSVI…FSLT), 3056-3146 (PSIK…FHLN), 3151-3240 (PSIE…YFLS), 3245-3335 (PSVA…FNLN), 3340-3429 (PTIR…YNLQ), 3434-3516 (PNMD…GEVS), 3527-3615 (PHIN…YLVR), 3620-3708 (PNIA…FILT), 3713-3797 (PNIK…RRID), 3804-3892 (PSIA…VDLT), 3897-3983 (PSIA…VTLH), 3988-4076 (PVIQ…LNVQ), 4079-4164 (PVIS…TKLT), 4169-4255 (PRIR…VSLT), 4260-4344 (PTFT…GFVY), 4348-4435 (PPVF…MSLT), and 4440-4527 (PIIT…VIVQ). A disulfide bridge links Cys451 with Cys499. 4 N-linked (GlcNAc...) asparagine glycosylation sites follow: Asn528, Asn550, Asn573, and Asn620. Cys541 and Cys591 form a disulfide bridge. A disulfide bridge connects residues Cys633 and Cys681. The N-linked (GlcNAc...) asparagine glycan is linked to Asn693. Cys723 and Cys772 form a disulfide bridge. Asn809 is a glycosylation site (N-linked (GlcNAc...) asparagine). 2 disulfide bridges follow: Cys814/Cys867 and Cys911/Cys960. Asn970 carries N-linked (GlcNAc...) asparagine glycosylation. 2 cysteine pairs are disulfide-bonded: Cys1002-Cys1051 and Cys1101-Cys1150. Asn1158 carries N-linked (GlcNAc...) asparagine glycosylation. Cys1192 and Cys1241 are joined by a disulfide. Asn1272 carries an N-linked (GlcNAc...) asparagine glycan. Cysteines 1288 and 1338 form a disulfide. N-linked (GlcNAc...) asparagine glycosylation occurs at Asn1369. Intrachain disulfides connect Cys1382–Cys1431 and Cys1475–Cys1525. Asn1552 carries N-linked (GlcNAc...) asparagine glycosylation. Cystine bridges form between Cys1569–Cys1618, Cys1663–Cys1712, Cys1756–Cys1805, and Cys1848–Cys1898. N-linked (GlcNAc...) asparagine glycosylation occurs at Asn1929. Cystine bridges form between Cys1942–Cys1991 and Cys2033–Cys2083. 2 N-linked (GlcNAc...) asparagine glycosylation sites follow: Asn2112 and Asn2155. 3 disulfide bridges follow: Cys2125–Cys2174, Cys2218–Cys2269, and Cys2314–Cys2363. N-linked (GlcNAc...) asparagine glycosylation occurs at Asn2395. Intrachain disulfides connect Cys2408/Cys2457, Cys2501/Cys2550, and Cys2597/Cys2646. Asn2689 carries N-linked (GlcNAc...) asparagine glycosylation. 2 disulfide bridges follow: Cys2696/Cys2745 and Cys2799/Cys2848. The N-linked (GlcNAc...) asparagine glycan is linked to Asn2887. Cysteines 2894 and 2943 form a disulfide. Residue Asn2973 is glycosylated (N-linked (GlcNAc...) asparagine). 6 cysteine pairs are disulfide-bonded: Cys2986–Cys3035, Cys3081–Cys3130, Cys3173–Cys3224, Cys3268–Cys3319, Cys3364–Cys3413, and Cys3457–Cys3506. N-linked (GlcNAc...) asparagine glycans are attached at residues Asn3221 and Asn3300. N-linked (GlcNAc...) asparagine glycosylation is present at Asn3530. 2 disulfide bridges follow: Cys3550–Cys3599 and Cys3643–Cys3692. Residues Asn3689 and Asn3727 are each glycosylated (N-linked (GlcNAc...) asparagine). The cysteines at positions 3734 and 3783 are disulfide-linked. The N-linked (GlcNAc...) asparagine glycan is linked to Asn3812. 26 disulfides stabilise this stretch: Cys3825/Cys3876, Cys3918/Cys3967, Cys4009/Cys4058, Cys4100/Cys4148, Cys4190/Cys4239, Cys4281/Cys4328, Cys4371/Cys4419, Cys4461/Cys4509, Cys4541/Cys4578, Cys4545/Cys4583, Cys4556/Cys4568, Cys4598/Cys4635, Cys4602/Cys4640, Cys4613/Cys4625, Cys4655/Cys4692, Cys4659/Cys4697, Cys4670/Cys4682, Cys4712/Cys4749, Cys4716/Cys4754, Cys4727/Cys4739, Cys4769/Cys4806, Cys4773/Cys4811, Cys4784/Cys4796, Cys4826/Cys4863, Cys4830/Cys4868, and Cys4841/Cys4853. A glycan (N-linked (GlcNAc...) asparagine) is linked at Asn4029. 2 N-linked (GlcNAc...) asparagine glycosylation sites follow: Asn4401 and Asn4491. TSP type-1 domains lie at 4529 to 4584 (HGGF…KPCP), 4586 to 4641 (DGSW…RPCP), 4643 to 4698 (HGAW…RNCP), 4700 to 4755 (HGKW…DPCP), 4757 to 4812 (HGNW…DMCP), and 4814 to 4869 (DGSW…QACP). Asn4606 carries N-linked (GlcNAc...) asparagine glycosylation. The region spanning 4871 to 5093 (GPQRARGSVI…SKGDRSNQCP (223 aa)) is the Nidogen G2 beta-barrel domain. N-linked (GlcNAc...) asparagine glycans are attached at residues Asn4894 and Asn5040. In terms of domain architecture, EGF-like 1; calcium-binding spans 5107–5146 (DEDECAAGNPCSHSCHNAMGTYYCSCPKGLTIAADGRTCQ). Disulfide bonds link Cys5111–Cys5121, Cys5117–Cys5130, and Cys5132–Cys5145. Positions 5147 to 5191 (DIDECALGRHTCHAGQDCDNTIGSYRCVVRCGSGFRRTSDGLSCQ) constitute an EGF-like 2; calcium-binding domain. Residues 5192–5229 (DINECQESSPCHQRCFNAIGSFHCGCEPGYQLKGRKCM) form the EGF-like 3; calcium-binding domain. 3 disulfide bridges follow: Cys5196/Cys5206, Cys5202/Cys5215, and Cys5217/Cys5228. The EGF-like 4; calcium-binding domain occupies 5230-5271 (DVNECRQNVCRPDQHCKNTRGGYKCIDLCPNGMTKAENGTCI). The N-linked (GlcNAc...) asparagine glycan is linked to Asn5267. Residues 5272 to 5307 (DIDECKDGTHQCRYNQICENTRGSYRCVCPRGYRSQ) enclose the EGF-like 5; calcium-binding domain. Intrachain disulfides connect Cys5276–Cys5289, Cys5283–Cys5298, Cys5319–Cys5330, Cys5326–Cys5339, Cys5341–Cys5354, Cys5436–Cys5446, Cys5442–Cys5455, and Cys5457–Cys5470. One can recognise an EGF-like 6; calcium-binding domain in the interval 5315–5355 (DINECEQVPKPCAHQCSNTPGSFKCICPPGQHLLGDGKSCA). Residues 5432–5471 (DIDECENTDACQHECKNTFGSYQCICPPGYQLTHNGKTCQ) enclose the EGF-like 7; calcium-binding domain. Asn5615 carries N-linked (GlcNAc...) asparagine glycosylation.

In terms of tissue distribution, expressed in hair follicles and in the dermis (at protein level). Expressed in skin fibroblasts and retinal pigment epithelium (RPE) cells.

It is found in the secreted. The protein resides in the extracellular space. It localises to the extracellular matrix. Its subcellular location is the basement membrane. The protein localises to the cytoplasm. It is found in the cell junction. The protein resides in the cleavage furrow. Its function is as follows. Involved in transforming growth factor beta-mediated rearrangement of the podocyte cytoskeleton which includes reduction of F-actin fibers and broadening, flattening and elongation of podocytes. Plays a role in basement membrane organization. May promote cleavage furrow maturation during cytokinesis in preimplantation embryos. May play a role in the architecture of adhesive and flexible epithelial cell junctions. May play a role during myocardial remodeling by imparting an effect on cardiac fibroblast migration. The protein is Hemicentin-1 (HMCN1) of Homo sapiens (Human).